Here is a 72-residue protein sequence, read N- to C-terminus: QVFDQACKGVYDRAIFKKLDRVCDDCYNLYRKPYVATSCRQNCYSNLVFRQCLDDLLLVDVVDEYVSGVQIV.

Gln1 bears the Pyrrolidone carboxylic acid mark. Phe3 bears the D-phenylalanine; in form CHHB-II mark. Intrachain disulfides connect Cys7-Cys43, Cys23-Cys39, and Cys26-Cys52. Val72 carries the post-translational modification Valine amide.

Post-translationally, stereoinversion of L-Phe (in CHHB-I) to D-Phe (in CHHB-II).

It localises to the secreted. In terms of biological role, hormone found in the sinus gland of isopods and decapods which controls the blood sugar level. Has a secretagogue action over the amylase released from the midgut gland. May act as a stress hormone and may be involved in the control of molting and reproduction. The chain is Crustacean hyperglycemic hormone B from Cherax destructor (Common yabby crayfish).